A 699-amino-acid polypeptide reads, in one-letter code: Endogenous retrovirus group K member 19 Env polyprotein (699 aa).

Residues 1 to 47 (MNPSEMQRKAPPRRRRHRNRAPLTHKMNKMVTSEEQMKLPSTKKAEP) are disordered. The first 89 residues, 1–89 (MNPSEMQRKA…ALMIVSMVVS (89 aa)), serve as a signal peptide directing secretion. Basic residues predominate over residues 10–20 (APPRRRRHRNR). The Extracellular segment spans residues 90–632 (LPMPAGAAAA…NLNPVTWVKT (543 aa)). 7 N-linked (GlcNAc...) asparagine glycosylation sites follow: N100, N128, N153, N274, N355, N372, and N461. The segment at 466–486 (FIFTLIAVIMGLIAVTATAAV) is fusion peptide. N507, N554, N566, and N585 each carry an N-linked (GlcNAc...) asparagine glycan. A helical transmembrane segment spans residues 633 to 653 (IGSTTIINLILILVCLFCLLL). The Cytoplasmic segment spans residues 654–699 (VCRCTQQLRRDSDHRERAMMTMAVLSKRKGGNVGKSKRDQIVTVSV).

Belongs to the beta type-B retroviral envelope protein family. HERV class-II K(HML-2) env subfamily. As to quaternary structure, the surface (SU) and transmembrane (TM) proteins form a heterodimer. SU and TM are attached by noncovalent interactions or by a labile interchain disulfide bond. Specific enzymatic cleavages in vivo yield the mature SU and TM proteins.

The protein resides in the cell membrane. The protein localises to the virion. In terms of biological role, retroviral envelope proteins mediate receptor recognition and membrane fusion during early infection. Endogenous envelope proteins may have kept, lost or modified their original function during evolution. This endogenous envelope protein has lost its original fusogenic properties. SU mediates receptor recognition. Its function is as follows. TM anchors the envelope heterodimer to the viral membrane through one transmembrane domain. The other hydrophobic domain, called fusion peptide, mediates fusion of the viral membrane with the target cell membrane. This Homo sapiens (Human) protein is Endogenous retrovirus group K member 19 Env polyprotein (ERVK-19).